The following is a 232-amino-acid chain: MNEAKRILLEGLWRNNSSLVQLLGLCPLLAVSNTATNALGLGLATTLVLVCTNTAVSALRRWITGEIRIPIYVMIIASVVSAVQMLINAYAFGLYQSLGIFIPLIVTNCIVIGRAEAYASQRPPALAALDGLSIGLGSTCTLLLLGALREVLGNGTLFDGADQLLGAWARVLRIEVFHTDTPFLLAMLPPGAFIGLGFMLVGKYLIDQRMKARQPKAARPVVLQQGQPLADE.

Transmembrane regions (helical) follow at residues 12 to 31 (LWRNNSSLVQLLGLCPLLAV), 39 to 59 (LGLGLATTLVLVCTNTAVSAL), 69 to 89 (IPIYVMIIASVVSAVQMLINA), 92 to 112 (FGLYQSLGIFIPLIVTNCIVI), 125 to 145 (ALAALDGLSIGLGSTCTLLLL), and 182 to 202 (PFLLAMLPPGAFIGLGFMLVG).

It belongs to the NqrDE/RnfAE family. In terms of assembly, the complex is composed of six subunits: RnfA, RnfB, RnfC, RnfD, RnfE and RnfG.

It localises to the cell inner membrane. Its function is as follows. Part of a membrane-bound complex that couples electron transfer with translocation of ions across the membrane. The chain is Ion-translocating oxidoreductase complex subunit E from Sodalis glossinidius (strain morsitans).